The primary structure comprises 315 residues: MGDQLILATGGYDHTIKVWQAHTGNCIKTMRFVETSQVNALDRTPDKTRLAACGYQCIRLYDLESNCTAPVINFDGVQKNVTRLGFQEDGNWMFTAGEDHHVRIWDMISAPPHCSRVFDCESPVNAACLHPNQVEIGMGSQNGNVFLWDVKSEKHECIVPEVDASIQDVAISPDGHYLAAANNKGNCYIWSLCSSPDQKMSTMRPTKKIQAHTRYILRCKFSPDSRLLLTTSGDGTACLWKTSDFSKWRELCIENYWVWDAAFSADSKWLFTASSDGVARLWKLETKTPTREYTGHTKAITALSFKDEIIRKVNH.

WD repeat units lie at residues 1-31 (MGDQLILATGGYDHTIKVWQAHTGNCIKTMR), 33-71 (VETSQVNALDRTPDKTRLAACGYQCIRLYDLESNCTAPV), 76-115 (GVQKNVTRLGFQEDGNWMFTAGEDHHVRIWDMISAPPHCS), 119-158 (DCESPVNAACLHPNQVEIGMGSQNGNVFLWDVKSEKHECI), 161-200 (EVDASIQDVAISPDGHYLAAANNKGNCYIWSLCSSPDQKM), 211-250 (AHTRYILRCKFSPDSRLLLTTSGDGTACLWKTSDFSKWRE), 253-292 (IENYWVWDAAFSADSKWLFTASSDGVARLWKLETKTPTRE), and 295-315 (GHTKAITALSFKDEIIRKVNH).

Belongs to the WD repeat LST8 family.

The protein localises to the cytoplasm. The polypeptide is Protein LST8 homolog (Drosophila pseudoobscura pseudoobscura (Fruit fly)).